We begin with the raw amino-acid sequence, 274 residues long: Large ribosomal subunit protein uL2 (274 aa).

Disordered regions lie at residues 38–57 and 224–256; these read KRTG…VGGG and AMNP…KGYK. Positions 229-239 are enriched in basic and acidic residues; sequence DHPHGGGEGRN.

The protein belongs to the universal ribosomal protein uL2 family. In terms of assembly, part of the 50S ribosomal subunit. Forms a bridge to the 30S subunit in the 70S ribosome.

Functionally, one of the primary rRNA binding proteins. Required for association of the 30S and 50S subunits to form the 70S ribosome, for tRNA binding and peptide bond formation. It has been suggested to have peptidyltransferase activity; this is somewhat controversial. Makes several contacts with the 16S rRNA in the 70S ribosome. In Acinetobacter baumannii (strain AB307-0294), this protein is Large ribosomal subunit protein uL2.